The sequence spans 575 residues: NEDD4-binding protein 2-like 2 (575 aa).

3 stretches are compositionally biased toward basic and acidic residues: residues 69–87 (QEDK…EMPG), 129–142 (PPEK…KSET), and 149–167 (DSKR…KLEM). Disordered regions lie at residues 69–169 (QEDK…EMDT) and 555–575 (GEQR…ADDY). Positions 162–194 (SKKLEMDTELSQFYKEIEELENENEASQGSCTE) form a coiled coil. Polar residues predominate over residues 564–575 (GSHSQVSIADDY).

This Mus musculus (Mouse) protein is NEDD4-binding protein 2-like 2 (N4bp2l2).